The primary structure comprises 493 residues: Probable cytosol aminopeptidase (493 aa).

Positions 262 and 267 each coordinate Mn(2+). Lys-274 is an active-site residue. Positions 286, 345, and 347 each coordinate Mn(2+). The active site involves Arg-349.

Belongs to the peptidase M17 family. The cofactor is Mn(2+).

It is found in the cytoplasm. It catalyses the reaction Release of an N-terminal amino acid, Xaa-|-Yaa-, in which Xaa is preferably Leu, but may be other amino acids including Pro although not Arg or Lys, and Yaa may be Pro. Amino acid amides and methyl esters are also readily hydrolyzed, but rates on arylamides are exceedingly low.. The catalysed reaction is Release of an N-terminal amino acid, preferentially leucine, but not glutamic or aspartic acids.. Presumably involved in the processing and regular turnover of intracellular proteins. Catalyzes the removal of unsubstituted N-terminal amino acids from various peptides. This Cyanothece sp. (strain PCC 7425 / ATCC 29141) protein is Probable cytosol aminopeptidase.